Reading from the N-terminus, the 178-residue chain is uncharacterized protein (178 aa).

Transmembrane regions (helical) follow at residues 6-26 (AIFG…VSGL) and 154-174 (KELV…AMLI).

Its subcellular location is the cell membrane. This is an uncharacterized protein from Methanocaldococcus jannaschii (strain ATCC 43067 / DSM 2661 / JAL-1 / JCM 10045 / NBRC 100440) (Methanococcus jannaschii).